The chain runs to 468 residues: ATP synthase subunit beta (468 aa).

ATP is bound at residue 155–162 (GGAGVGKT).

It belongs to the ATPase alpha/beta chains family. F-type ATPases have 2 components, CF(1) - the catalytic core - and CF(0) - the membrane proton channel. CF(1) has five subunits: alpha(3), beta(3), gamma(1), delta(1), epsilon(1). CF(0) has three main subunits: a(1), b(2) and c(9-12). The alpha and beta chains form an alternating ring which encloses part of the gamma chain. CF(1) is attached to CF(0) by a central stalk formed by the gamma and epsilon chains, while a peripheral stalk is formed by the delta and b chains.

Its subcellular location is the cell inner membrane. The catalysed reaction is ATP + H2O + 4 H(+)(in) = ADP + phosphate + 5 H(+)(out). Its function is as follows. Produces ATP from ADP in the presence of a proton gradient across the membrane. The catalytic sites are hosted primarily by the beta subunits. This chain is ATP synthase subunit beta, found in Thermotoga neapolitana (strain ATCC 49049 / DSM 4359 / NBRC 107923 / NS-E).